We begin with the raw amino-acid sequence, 206 residues long: Ribosomal RNA small subunit methyltransferase G (206 aa).

S-adenosyl-L-methionine contacts are provided by residues glycine 73, leucine 78, 124 to 125 (VE), and arginine 139.

Belongs to the methyltransferase superfamily. RNA methyltransferase RsmG family.

It localises to the cytoplasm. It carries out the reaction guanosine(527) in 16S rRNA + S-adenosyl-L-methionine = N(7)-methylguanosine(527) in 16S rRNA + S-adenosyl-L-homocysteine. Functionally, specifically methylates the N7 position of guanine in position 527 of 16S rRNA. This Yersinia pseudotuberculosis serotype O:3 (strain YPIII) protein is Ribosomal RNA small subunit methyltransferase G.